Consider the following 176-residue polypeptide: ATP-dependent protease subunit HslV (176 aa).

The active site involves T5. 3 residues coordinate Na(+): A161, C164, and T167.

Belongs to the peptidase T1B family. HslV subfamily. In terms of assembly, a double ring-shaped homohexamer of HslV is capped on each side by a ring-shaped HslU homohexamer. The assembly of the HslU/HslV complex is dependent on binding of ATP.

Its subcellular location is the cytoplasm. The catalysed reaction is ATP-dependent cleavage of peptide bonds with broad specificity.. Allosterically activated by HslU binding. Protease subunit of a proteasome-like degradation complex believed to be a general protein degrading machinery. The protein is ATP-dependent protease subunit HslV of Caldicellulosiruptor saccharolyticus (strain ATCC 43494 / DSM 8903 / Tp8T 6331).